The primary structure comprises 188 residues: Peptidyl-tRNA hydrolase (188 aa).

Residue Y16 participates in tRNA binding. H21 serves as the catalytic Proton acceptor. F66, N68, and N114 together coordinate tRNA.

Belongs to the PTH family. Monomer.

It is found in the cytoplasm. The enzyme catalyses an N-acyl-L-alpha-aminoacyl-tRNA + H2O = an N-acyl-L-amino acid + a tRNA + H(+). Its function is as follows. Hydrolyzes ribosome-free peptidyl-tRNAs (with 1 or more amino acids incorporated), which drop off the ribosome during protein synthesis, or as a result of ribosome stalling. In terms of biological role, catalyzes the release of premature peptidyl moieties from peptidyl-tRNA molecules trapped in stalled 50S ribosomal subunits, and thus maintains levels of free tRNAs and 50S ribosomes. This Geobacter sp. (strain M21) protein is Peptidyl-tRNA hydrolase.